The chain runs to 219 residues: MANVSIRKYKNSDYETVNFLFVEGTKEHLPAACWNTLKKPRFYFIIIVACASIFMCTSSYVLSLTSLVALLAVGWYGLYLEFHGYASRCQREDMLDIENSYMMSDNTCFWVAEIDRKVVGIVGAKPLKEADDELFLLHLSVARDCRQQRIGTKLCQTVIDFARQRGFKAVCLETANIQDAAIKLYEAVGFKKSLVAIPPFLLNQYTSFTVIYYRYDIKS.

The next 2 helical transmembrane spans lie at 42 to 62 (FYFIIIVACASIFMCTSSYVL) and 64 to 84 (LTSLVALLAVGWYGLYLEFHG). An N-acetyltransferase domain is found at 62–218 (LSLTSLVALL…TVIYYRYDIK (157 aa)).

This sequence belongs to the camello family. At the beginning of gastrulation, expressed in deep cells of the presumptive mesoderm. At later gastrulation stages, expressed at the interface between already involuted and preinvoluted mesoderm. At late neurula and tailbud stages, expressed in the deep mass of cells lying ventrally and laterally to the closed blastopore.

Its subcellular location is the golgi apparatus membrane. In terms of biological role, plays a role in regulation of gastrulation, possibly by controlled reduction of cell adhesion which is necessary for optimal cell motility. This Xenopus laevis (African clawed frog) protein is Probable N-acetyltransferase camello.